Consider the following 428-residue polypeptide: Trigger factor (428 aa).

The PPIase FKBP-type domain occupies 166-250; sequence GDIVTFDFKG…IKNIKEKILP (85 aa).

This sequence belongs to the FKBP-type PPIase family. Tig subfamily.

The protein resides in the cytoplasm. It catalyses the reaction [protein]-peptidylproline (omega=180) = [protein]-peptidylproline (omega=0). In terms of biological role, involved in protein export. Acts as a chaperone by maintaining the newly synthesized protein in an open conformation. Functions as a peptidyl-prolyl cis-trans isomerase. This is Trigger factor from Mycoplasma mycoides subsp. mycoides SC (strain CCUG 32753 / NCTC 10114 / PG1).